The following is a 275-amino-acid chain: Gap junction gamma-3 protein (275 aa).

The Cytoplasmic portion of the chain corresponds to 1-22 (MCGSFLRRVAAEESRHPTPVGR). A helical membrane pass occupies residues 23-43 (LLLPALLGLRLVLLAAGGTGV). Over 44–77 (FGGGEEQSEFVCHTQQAGCKAVCYDAFHPLSPLR) the chain is Extracellular. Residues 78–98 (FWAFQVTLVAVPSALYMGFIL) traverse the membrane as a helical segment. At 99–134 (YHVIWHWEASEKVKTEEETLSQGEKGGEASRAGSSR) the chain is on the cytoplasmic side. The helical transmembrane segment at 135–155 (LLWAYVAQLGVRLALEGAALG) threads the bilayer. Topologically, residues 156–196 (GQYHLYGFRMPSSFVCRLEPCLGSTNCYLSRPSEKSIFLKT) are extracellular. A helical membrane pass occupies residues 197 to 217 (MFGVTGLCLLFTLLELVLLGL). Over 218–275 (GRWWRIWRHKSPSSNYSPTSQSAKRCKAPTDNFPVVEIRERPGEAGERGSEVPLSARP) the chain is Cytoplasmic. The span at 254 to 267 (EIRERPGEAGERGS) shows a compositional bias: basic and acidic residues. The tract at residues 254–275 (EIRERPGEAGERGSEVPLSARP) is disordered.

The protein belongs to the connexin family. Gamma-type subfamily. In terms of assembly, a connexon is composed of a hexamer of connexins.

The protein resides in the cell membrane. Its subcellular location is the cell junction. The protein localises to the gap junction. In terms of biological role, one gap junction consists of a cluster of closely packed pairs of transmembrane channels, the connexons, through which materials of low MW diffuse from one cell to a neighboring cell. In Bos taurus (Bovine), this protein is Gap junction gamma-3 protein (GJC3).